The chain runs to 228 residues: THAP domain-containing protein 2 (228 aa).

A THAP-type zinc finger spans residues 1-80 (MPTNCAAAGC…LKMDAVPTIF (80 aa)). The HCFC1-binding motif (HBM) motif lies at 123 to 126 (EHSY).

This chain is THAP domain-containing protein 2 (THAP2), found in Homo sapiens (Human).